Here is a 365-residue protein sequence, read N- to C-terminus: Probable L-tyrosine/L-aspartate decarboxylase (365 aa).

Residue lysine 224 is modified to N6-(pyridoxal phosphate)lysine.

This sequence belongs to the group II decarboxylase family. MfnA subfamily. Pyridoxal 5'-phosphate is required as a cofactor.

It catalyses the reaction L-tyrosine + H(+) = tyramine + CO2. The catalysed reaction is L-aspartate + H(+) = beta-alanine + CO2. The protein operates within cofactor biosynthesis; methanofuran biosynthesis. It participates in cofactor biosynthesis; coenzyme A biosynthesis. Catalyzes the decarboxylation of L-tyrosine to produce tyramine for methanofuran biosynthesis. Can also catalyze the decarboxylation of L-aspartate to produce beta-alanine for coenzyme A (CoA) biosynthesis. The chain is Probable L-tyrosine/L-aspartate decarboxylase from Methanoregula boonei (strain DSM 21154 / JCM 14090 / 6A8).